A 413-amino-acid polypeptide reads, in one-letter code: NADPH dehydrogenase afvA (413 aa).

Residue 53–56 (APLC) coordinates FMN. Y58 serves as a coordination point for substrate. FMN-binding residues include A88 and Q130. 211–214 (HAAH) is a binding site for substrate. Residues R264 and 370–371 (GR) each bind FMN.

It belongs to the NADH:flavin oxidoreductase/NADH oxidase family. NamA subfamily. It depends on FMN as a cofactor.

The catalysed reaction is A + NADPH + H(+) = AH2 + NADP(+). It participates in secondary metabolite biosynthesis. Functionally, NADPH dehydrogenase; part of the gene cluster that mediates the biosynthesis of aflavarin, a bicoumarin that exhibits anti-insectan activity against the fungivorous beetle C.hemipterus. This Aspergillus flavus (strain ATCC 200026 / FGSC A1120 / IAM 13836 / NRRL 3357 / JCM 12722 / SRRC 167) protein is NADPH dehydrogenase afvA.